Consider the following 315-residue polypeptide: Tyrosine recombinase XerC (315 aa).

The Core-binding (CB) domain maps to 1–103; it reads MITSFYAFLD…AIKSFARFCV (103 aa). The Tyr recombinase domain maps to 124-306; it reads ELPSPLTYEQ…SMKLKKQIHD (183 aa). Catalysis depends on residues R164, K188, H258, R261, and H284. Y293 serves as the catalytic O-(3'-phospho-DNA)-tyrosine intermediate.

The protein belongs to the 'phage' integrase family. XerC subfamily. In terms of assembly, forms a cyclic heterotetrameric complex composed of two molecules of XerC and two molecules of XerD.

It is found in the cytoplasm. Functionally, site-specific tyrosine recombinase, which acts by catalyzing the cutting and rejoining of the recombining DNA molecules. The XerC-XerD complex is essential to convert dimers of the bacterial chromosome into monomers to permit their segregation at cell division. It also contributes to the segregational stability of plasmids. This chain is Tyrosine recombinase XerC, found in Chlamydia trachomatis serovar L2b (strain UCH-1/proctitis).